The following is a 487-amino-acid chain: Serine carboxypeptidase-like 38 (487 aa).

Positions 1–20 are cleaved as a signal peptide; the sequence is MGKQQDWSVTACIFLSLSLA. 3 cysteine pairs are disulfide-bonded: cysteine 119–cysteine 368, cysteine 280–cysteine 290, and cysteine 315–cysteine 336. Residue serine 215 is part of the active site. Asparagine 233 carries N-linked (GlcNAc...) asparagine glycosylation. Asparagine 317 and asparagine 357 each carry an N-linked (GlcNAc...) asparagine glycan. Aspartate 407 is an active-site residue. Residues asparagine 423 and asparagine 449 are each glycosylated (N-linked (GlcNAc...) asparagine). Histidine 460 is an active-site residue.

The protein belongs to the peptidase S10 family. In terms of tissue distribution, expressed in seedlings, roots, leaves, flowers and siliques.

The protein resides in the secreted. In terms of biological role, probable carboxypeptidase. The sequence is that of Serine carboxypeptidase-like 38 (SCPL38) from Arabidopsis thaliana (Mouse-ear cress).